Here is a 214-residue protein sequence, read N- to C-terminus: Sugar transporter SWEET1 (214 aa).

7 helical membrane-spanning segments follow: residues 3–23 (WMWLLSGACIVFTLGMFSSGL), 38–58 (IQFLPFLTTDLNNLGWFYYGY), 65–85 (LIIVNLIGASLQTLYMAAYIL), 93–113 (VVSQVLVSLGVLFLAHCYFTL), 125–145 (LGLFCSIFTISMYLSPLADLA), 157–177 (SFPLTVATFLTSTSWVLYGWV), and 181–201 (LYITVPNFPGIVTSLLRFWLF). Positions 6-89 (LLSGACIVFT…MAAYILYSLE (84 aa)) constitute a MtN3/slv 1 domain. The MtN3/slv 2 domain maps to 124-207 (QLGLFCSIFT…FWLFSRYPPD (84 aa)).

The protein belongs to the SWEET sugar transporter family.

Its subcellular location is the golgi apparatus membrane. It is found in the cell membrane. Its function is as follows. Mediates sugar transport across membranes. In Xenopus tropicalis (Western clawed frog), this protein is Sugar transporter SWEET1 (slc50a1).